Consider the following 151-residue polypeptide: Guanylate kinase homolog (151 aa).

A Guanylate kinase-like domain is found at 1-141 (MEREGVDYHY…AYSKLIQILQ (141 aa)).

The protein belongs to the guanylate kinase family.

The protein is Guanylate kinase homolog of Bos taurus (Bovine).